A 432-amino-acid polypeptide reads, in one-letter code: Trigger factor (432 aa).

The PPIase FKBP-type domain maps to 161-246 (EDRVTIDFTG…LKKVEERELP (86 aa)).

This sequence belongs to the FKBP-type PPIase family. Tig subfamily. In terms of assembly, homodimer and monomer. In vivo most of the ribosomes are in complex with monomeric TF. Uncomplexed TF, however, is in a monomer-dimer equilibrium with approximately two thirds of TF existing in a dimeric state.

Its subcellular location is the cytoplasm. It catalyses the reaction [protein]-peptidylproline (omega=180) = [protein]-peptidylproline (omega=0). Involved in protein export. Acts as a chaperone by maintaining the newly synthesized protein in an open conformation. Functions as a peptidyl-prolyl cis-trans isomerase. In Escherichia fergusonii (strain ATCC 35469 / DSM 13698 / CCUG 18766 / IAM 14443 / JCM 21226 / LMG 7866 / NBRC 102419 / NCTC 12128 / CDC 0568-73), this protein is Trigger factor.